Here is a 219-residue protein sequence, read N- to C-terminus: Ribose-5-phosphate isomerase A (219 aa).

Substrate-binding positions include 28–31 (SGST), 81–84 (DGAD), and 94–97 (KGGG). The active-site Proton acceptor is E103. Position 121 (K121) interacts with substrate.

This sequence belongs to the ribose 5-phosphate isomerase family. In terms of assembly, homodimer.

The catalysed reaction is aldehydo-D-ribose 5-phosphate = D-ribulose 5-phosphate. It participates in carbohydrate degradation; pentose phosphate pathway; D-ribose 5-phosphate from D-ribulose 5-phosphate (non-oxidative stage): step 1/1. Its function is as follows. Catalyzes the reversible conversion of ribose-5-phosphate to ribulose 5-phosphate. The chain is Ribose-5-phosphate isomerase A from Haemophilus influenzae (strain 86-028NP).